Reading from the N-terminus, the 315-residue chain is Olfactory receptor 11A1 (315 aa).

Residues 1–27 (MEIVSTGNETITEFVLLGFYDIPELHF) are Extracellular-facing. An N-linked (GlcNAc...) asparagine glycan is attached at Asn-8. Residues 28-48 (LFFIVFTAVYVFIIIGNMLII) traverse the membrane as a helical segment. The Cytoplasmic portion of the chain corresponds to 49-56 (VAVVSSQR). A helical membrane pass occupies residues 57-77 (LHKPMYIFLANLSFLDILYTS). The Extracellular segment spans residues 78–100 (AVMPKMLEGFLQEATISVAGCLL). A disulfide bridge links Cys-98 with Cys-190. A helical membrane pass occupies residues 101 to 121 (QFFIFGSLATAECLLLAVMAY). Residues 122–140 (DRYLAICYPLHYPLLMGPR) lie on the Cytoplasmic side of the membrane. A helical membrane pass occupies residues 141–161 (RYMGLVVTTWLSGFVVDGLVV). Topologically, residues 162–198 (ALVAQLRFCGPNHIDQFYCDFMLFVGLACSDPRVAQV) are extracellular. A helical transmembrane segment spans residues 199-218 (TTLILSVFCLTIPFGLILTS). Residues 219–238 (YARIVVAVLRVPAGASRRRA) lie on the Cytoplasmic side of the membrane. Residues 239–259 (FSTCSSHLAVVTTFYGTLMIF) traverse the membrane as a helical segment. Residues 260-272 (YVAPSAVHSQLLS) lie on the Extracellular side of the membrane. A helical membrane pass occupies residues 273 to 293 (KVFSLLYTVVTPLFNPVIYTM). The Cytoplasmic segment spans residues 294-315 (RNKEVHQALRKILCIKQTETLD).

It belongs to the G-protein coupled receptor 1 family.

It localises to the cell membrane. Odorant receptor. The polypeptide is Olfactory receptor 11A1 (OR11A1) (Homo sapiens (Human)).